The following is a 250-amino-acid chain: uncharacterized protein (250 aa).

A signal peptide spans 1–19 (MAKPRNAAESKAAKAQANA). 2 consecutive transmembrane segments (helical) span residues 51–71 (IGAF…AGGF) and 73–93 (MFTM…VIFG). The disordered stretch occupies residues 226-250 (AGVMPKGPLPTTAKMRSVQRTVRRK).

The protein localises to the cell membrane. This is an uncharacterized protein from Mycobacterium tuberculosis (strain CDC 1551 / Oshkosh).